A 628-amino-acid chain; its full sequence is Voltage-gated potassium channel KCNC4 (628 aa).

Disordered stretches follow at residues 1-24 (MISS…SKTC) and 62-88 (LAWL…GSSG). Residues 1–28 (MISSVCVSSYRGRKSGNKPPSKTCLKEE) are inactivation gate. At 1–230 (MISSVCVSSY…EDPYSSRAAR (230 aa)) the chain is on the cytoplasmic side. 4 positions are modified to phosphoserine: Ser-8, Ser-9, Ser-15, and Ser-21. The span at 77–88 (DGGGAGSSGSSG) shows a compositional bias: gly residues. Zn(2+) contacts are provided by His-120, Cys-126, Cys-147, and Cys-148. A helical membrane pass occupies residues 231–251 (VVAFASLFFILVSITTFCLET). Residues Asn-260 and Asn-269 are each glycosylated (N-linked (GlcNAc...) asparagine). Residues 282–302 (EPILTYIEGVCVMWFTLEFLV) form a helical membrane-spanning segment. Residues 303-316 (RIVCCPDTLDFVKN) are Cytoplasmic-facing. A helical transmembrane segment spans residues 317 to 337 (LLNIIDFVAILPFYLEVGLSG). Residues 349–368 (FLRVVRFVRILRIFKLTRHF) form a helical; Voltage-sensor membrane-spanning segment. Residues 369 to 384 (VGLRVLGHTLRASTNE) are Cytoplasmic-facing. Residues 385–405 (FLLLIIFLALGVLIFATMIYY) traverse the membrane as a helical segment. The K(+) site is built by Thr-440, Leu-441, Gly-442, and Tyr-443. The short motif at 440-445 (TLGYGD) is the Selectivity filter element. The helical transmembrane segment at 456 to 476 (VGALCALAGVLTIAMPVPVIV) threads the bilayer. Residues 477–628 (NNFGMYYSLA…CVPVSHTCAL (152 aa)) are Cytoplasmic-facing. The tract at residues 493 to 584 (PKKRKKHVPR…RRALRRSGTR (92 aa)) is disordered. The span at 531 to 546 (AREEGVVERKRADSKQ) shows a compositional bias: basic and acidic residues.

Belongs to the potassium channel family. C (Shaw) (TC 1.A.1.2) subfamily. Kv3.4/KCNC4 sub-subfamily. As to quaternary structure, homotetramer. Heterotetramer of potassium channel proteins. In terms of processing, phosphorylation of serine residues in the inactivation gate inhibits rapid channel closure.

Its subcellular location is the membrane. It catalyses the reaction K(+)(in) = K(+)(out). Voltage-gated potassium channel that opens in response to the voltage difference across the membrane, forming a potassium-selective channel through which potassium ions pass in accordance with their electrochemical gradient. The channel displays rapid activation and inactivation kinetics. The protein is Voltage-gated potassium channel KCNC4 of Mus musculus (Mouse).